The chain runs to 1146 residues: Sodium/hydrogen exchanger 7 (1146 aa).

The Extracellular portion of the chain corresponds to 1 to 28 (MTTVIDATMAYRFLEEATDSSSSSSSSK). The chain crosses the membrane as a helical span at residues 29-49 (LESSPVDAVLFVGMSLVLGIA). The Cytoplasmic portion of the chain corresponds to 50 to 58 (SRHLLRGTR). Residues 59-79 (VPYTVALLVIGIALGSLEYGA) form a helical membrane-spanning segment. Residues 80–99 (KHNLGKIGHGIRIWNEIDPE) are Extracellular-facing. A helical membrane pass occupies residues 100-120 (LLLAVFLPALLFESSFSMEVH). Residues 121 to 127 (QIKRCLG) lie on the Cytoplasmic side of the membrane. The chain crosses the membrane as a helical span at residues 128 to 148 (QMVLLAVPGVLISTACLGSLV). At 149–159 (KVTFPYEWDWK) the chain is on the extracellular side. A helical membrane pass occupies residues 160 to 180 (TSLLLGGLLSATDPVAVVALL). Residues 181-191 (KELGASKKLST) are Cytoplasmic-facing. The helical transmembrane segment at 192-212 (IIEGESLMNDGTAIVVFQLFL) threads the bilayer. The Extracellular segment spans residues 213–227 (KMAMGQNSDWSSIIK). The helical transmembrane segment at 228 to 250 (FLLKVALGAVGIGLAFGIASVIW) threads the bilayer. The Cytoplasmic portion of the chain corresponds to 251–253 (LKF). Residues 254–273 (IFNDTVIEITLTIAVSYFAY) form a helical membrane-spanning segment. Topologically, residues 274–278 (YTAQE) are extracellular. Residues 279–299 (WAGASGVLTVMTLGMFYAAFA) traverse the membrane as a helical segment. Residues 300-313 (RTAFKGDSQKSLHH) lie on the Cytoplasmic side of the membrane. A helical transmembrane segment spans residues 314–334 (FWEMVAYIANTLIFILSGVVI). Over 335–352 (AEGILDSDKIAYQGNSWR) the chain is Extracellular. A helical transmembrane segment spans residues 353–373 (FLFLLYVYIQLSRVVVVGVLY). Residues 374 to 387 (PLLCRFGYGLDWKE) lie on the Cytoplasmic side of the membrane. A helical transmembrane segment spans residues 388-408 (SIILVWSGLRGAVALALSLSV). The Extracellular portion of the chain corresponds to 409–420 (KQSSGNSHISKE). Residues 421–441 (TGTLFLFFTGGIVFLTLIVNG) form a helical membrane-spanning segment. At 442 to 1146 (STTQFVLRLL…PSKIVFRNDL (705 aa)) the chain is on the cytoplasmic side. 2 disordered regions span residues 981-1001 (LHRRPSSLTPPRSSSSDQLQR) and 1102-1128 (CQLPLKGESSTRQNTMVESSDEEDEDE). The segment covering 986–996 (SSLTPPRSSSS) has biased composition (low complexity). Polar residues predominate over residues 1109-1118 (ESSTRQNTMV).

The protein belongs to the monovalent cation:proton antiporter 1 (CPA1) transporter (TC 2.A.36) family. In terms of assembly, interacts with CIPK24/SOS2 and CBL4/SOS3. Post-translationally, phosphorylated by CIPK24/SOS2 in complex with CBL4/SOS3. More expressed in roots than in shoots. Mostly localized in parenchyma cells at the xylem/symplast boundary in roots, hypocotyls, stems and leaves. Also present in root tips epidermal cells.

The protein resides in the cell membrane. The catalysed reaction is Na(+)(in) + H(+)(out) = Na(+)(out) + H(+)(in). It catalyses the reaction K(+)(in) + H(+)(out) = K(+)(out) + H(+)(in). Acts in electroneutral exchange of protons for cations such as Na(+) or Li(+) across plasma membrane. Involved in Na(+) and K(+) homeostasis. Required for cytoplasmic Na(+) and Li(+) detoxification by secreting them from the cytoplasm to the extracellular space. Regulates Na(+) content of the xylem sap. The polypeptide is Sodium/hydrogen exchanger 7 (NHX7) (Arabidopsis thaliana (Mouse-ear cress)).